We begin with the raw amino-acid sequence, 251 residues long: Imidazole glycerol phosphate synthase subunit HisF (251 aa).

Active-site residues include Asp12 and Asp131.

Belongs to the HisA/HisF family. In terms of assembly, heterodimer of HisH and HisF.

It localises to the cytoplasm. The catalysed reaction is 5-[(5-phospho-1-deoxy-D-ribulos-1-ylimino)methylamino]-1-(5-phospho-beta-D-ribosyl)imidazole-4-carboxamide + L-glutamine = D-erythro-1-(imidazol-4-yl)glycerol 3-phosphate + 5-amino-1-(5-phospho-beta-D-ribosyl)imidazole-4-carboxamide + L-glutamate + H(+). It participates in amino-acid biosynthesis; L-histidine biosynthesis; L-histidine from 5-phospho-alpha-D-ribose 1-diphosphate: step 5/9. Its function is as follows. IGPS catalyzes the conversion of PRFAR and glutamine to IGP, AICAR and glutamate. The HisF subunit catalyzes the cyclization activity that produces IGP and AICAR from PRFAR using the ammonia provided by the HisH subunit. In Streptomyces griseus subsp. griseus (strain JCM 4626 / CBS 651.72 / NBRC 13350 / KCC S-0626 / ISP 5235), this protein is Imidazole glycerol phosphate synthase subunit HisF.